The sequence spans 629 residues: Ionotropic receptor 75a (629 aa).

At 1–335 (MQLVQLANFV…GDVFLQPFSP (335 aa)) the chain is on the extracellular side. N-linked (GlcNAc...) asparagine glycans are attached at residues Asn-61, Asn-112, Asn-126, Asn-144, Asn-166, and Asn-232. A helical membrane pass occupies residues 336–356 (LVWYLFGGVLSLIGVLLWITF). At 357–374 (YMECKRMQKRWRLDYLPS) the chain is on the cytoplasmic side. The chain crosses the membrane as a helical span at residues 375–395 (LLSTFLISFGAACIQSSSLIP). Over 396–402 (RSAGGRL) the chain is Extracellular. A helical membrane pass occupies residues 403–423 (IYFALFLISFIMYNYYTSVVV). Residues 424-592 (SSLLSSPVKS…NFVITVGMEY (169 aa)) lie on the Cytoplasmic side of the membrane. Residues 593–613 (VAPLLLMLICADILVVVILLV) form a helical membrane-spanning segment. Residues 614–629 (ELAWKRFFTRHLTFHP) lie on the Extracellular side of the membrane.

It belongs to the glutamate-gated ion channel (TC 1.A.10.1) family. As to expression, expressed in acetic-acid-sensing neurons in the antennal coeloconic 2 (ac2) and antennal coeloconic 3 (ac3) sensilla class of sensory hairs (at protein level).

It localises to the cell membrane. It is found in the cell projection. Its subcellular location is the dendrite. Functionally, odorant receptor for acetic and propionic acid. Functions as part of an olfactory receptor complex including the ionotropic receptor coreceptor Ir8a. The protein is Ionotropic receptor 75a of Drosophila melanogaster (Fruit fly).